The following is a 327-amino-acid chain: Peroxidase 21 (327 aa).

The N-terminal stretch at 1–28 (MANAKPFCLLGFFCLLLQLFSIFHIGNG) is a signal peptide. 4 disulfides stabilise this stretch: cysteine 39/cysteine 118, cysteine 72/cysteine 77, cysteine 124/cysteine 323, and cysteine 204/cysteine 231. The Proton acceptor role is filled by histidine 70. Residues aspartate 71, valine 74, aspartate 78, and serine 80 each contribute to the Ca(2+) site. Residue proline 167 coordinates substrate. Asparagine 170 is a glycosylation site (N-linked (GlcNAc...) asparagine). Histidine 197 contacts heme b. Serine 198 contacts Ca(2+). The Ca(2+) site is built by aspartate 247, threonine 250, and aspartate 255.

It belongs to the peroxidase family. Classical plant (class III) peroxidase subfamily. The cofactor is heme b. Requires Ca(2+) as cofactor. As to expression, preferentially expressed in roots and leaves, slightly in stems.

It catalyses the reaction 2 a phenolic donor + H2O2 = 2 a phenolic radical donor + 2 H2O. Removal of H(2)O(2), oxidation of toxic reductants, biosynthesis and degradation of lignin, suberization, auxin catabolism, response to environmental stresses such as wounding, pathogen attack and oxidative stress. These functions might be dependent on each isozyme/isoform in each plant tissue. In terms of biological role, might function as heat shock-like defense protein. May be implicated in the systemic acquired resistance response. The polypeptide is Peroxidase 21 (PER21) (Arabidopsis thaliana (Mouse-ear cress)).